Here is a 338-residue protein sequence, read N- to C-terminus: Ketol-acid reductoisomerase (NADP(+)) (338 aa).

One can recognise a KARI N-terminal Rossmann domain in the interval 1 to 181; it reads MKVYYDKDCD…GGGRTGIIET (181 aa). NADP(+) is bound by residues 24 to 27, Arg-47, Ser-50, Ser-52, and 82 to 85; these read YGSQ and DEFQ. Residue His-107 is part of the active site. Residue Gly-133 participates in NADP(+) binding. The KARI C-terminal knotted domain maps to 182–327; sequence TFKDETETDL…EKLRTMMPWI (146 aa). 4 residues coordinate Mg(2+): Asp-190, Glu-194, Glu-226, and Glu-230. Ser-251 provides a ligand contact to substrate.

It belongs to the ketol-acid reductoisomerase family. Mg(2+) serves as cofactor.

It carries out the reaction (2R)-2,3-dihydroxy-3-methylbutanoate + NADP(+) = (2S)-2-acetolactate + NADPH + H(+). It catalyses the reaction (2R,3R)-2,3-dihydroxy-3-methylpentanoate + NADP(+) = (S)-2-ethyl-2-hydroxy-3-oxobutanoate + NADPH + H(+). The protein operates within amino-acid biosynthesis; L-isoleucine biosynthesis; L-isoleucine from 2-oxobutanoate: step 2/4. It functions in the pathway amino-acid biosynthesis; L-valine biosynthesis; L-valine from pyruvate: step 2/4. Functionally, involved in the biosynthesis of branched-chain amino acids (BCAA). Catalyzes an alkyl-migration followed by a ketol-acid reduction of (S)-2-acetolactate (S2AL) to yield (R)-2,3-dihydroxy-isovalerate. In the isomerase reaction, S2AL is rearranged via a Mg-dependent methyl migration to produce 3-hydroxy-3-methyl-2-ketobutyrate (HMKB). In the reductase reaction, this 2-ketoacid undergoes a metal-dependent reduction by NADPH to yield (R)-2,3-dihydroxy-isovalerate. The polypeptide is Ketol-acid reductoisomerase (NADP(+)) (Azotobacter vinelandii (strain DJ / ATCC BAA-1303)).